The following is a 184-amino-acid chain: Photosystem I assembly protein Ycf4 (184 aa).

Helical transmembrane passes span 19 to 39 and 57 to 77; these read ISNL…VLVG and IIFF…LFIS.

The protein belongs to the Ycf4 family.

The protein resides in the plastid thylakoid membrane. In terms of biological role, seems to be required for the assembly of the photosystem I complex. The chain is Photosystem I assembly protein Ycf4 from Cuscuta reflexa (Southern Asian dodder).